The following is a 123-amino-acid chain: MDNKTYEISSAEWEVMNIIWMKKYASANNIIEEIQMQRDWSPKTIRTLITRLYKKGFIDRKKDNKIFQYYSLVEESDIKYKTSKNFINKVYKGGFNSLVLNFVEKEDLSQDEIEELRNILNKK.

Positions 7–71 (EISSAEWEVM…KDNKIFQYYS (65 aa)) form a DNA-binding region, H-T-H motif. Residues 74 to 123 (EESDIKYKTSKNFINKVYKGGFNSLVLNFVEKEDLSQDEIEELRNILNKK) form an important for dimerization region.

It belongs to the BlaI transcriptional regulatory family. As to quaternary structure, monomer and homodimer. Upon exposure to beta-lactams, proteolytic cleavage at a single site impairs dimerization and abolishes repressor activity.

It localises to the cytoplasm. Functionally, transcriptional repressor that constitutively blocks the transcription of the gene for the penicillin-binding protein MecA. Binds DNA as a dimer. This is Methicillin resistance regulatory protein MecI (mecI) from Mammaliicoccus sciuri (Staphylococcus sciuri).